Here is a 61-residue protein sequence, read N- to C-terminus: Transmembrane protein 300R (61 aa).

The next 2 helical transmembrane spans lie at 5 to 25 (FLDL…FYLT) and 35 to 55 (SLSY…IYLQ).

It localises to the membrane. The protein is Transmembrane protein 300R of Invertebrate iridescent virus 6 (IIV-6).